A 417-amino-acid polypeptide reads, in one-letter code: Acid phosphatase (417 aa).

Positions 1 to 19 (MFTKQSLVTLLGGLSLAVA) are cleaved as a signal peptide. Residues Asn-122, Asn-187, and Asn-209 are each glycosylated (N-linked (GlcNAc...) asparagine). The Proton donor role is filled by Asp-216. N-linked (GlcNAc...) asparagine glycans are attached at residues Asn-218, Asn-333, and Asn-383.

Post-translationally, the N-terminus is blocked.

It localises to the secreted. It carries out the reaction a phosphate monoester + H2O = an alcohol + phosphate. In Aspergillus niger, this protein is Acid phosphatase (phoA).